We begin with the raw amino-acid sequence, 477 residues long: Argininosuccinate lyase (477 aa).

Belongs to the lyase 1 family. Argininosuccinate lyase subfamily.

The protein resides in the cytoplasm. It carries out the reaction 2-(N(omega)-L-arginino)succinate = fumarate + L-arginine. It functions in the pathway amino-acid biosynthesis; L-arginine biosynthesis; L-arginine from L-ornithine and carbamoyl phosphate: step 3/3. This is Argininosuccinate lyase from Acinetobacter baumannii (strain AB307-0294).